The primary structure comprises 297 residues: tRNA pseudouridine synthase B (297 aa).

Catalysis depends on D44, which acts as the Nucleophile.

This sequence belongs to the pseudouridine synthase TruB family. Type 1 subfamily.

The enzyme catalyses uridine(55) in tRNA = pseudouridine(55) in tRNA. In terms of biological role, responsible for synthesis of pseudouridine from uracil-55 in the psi GC loop of transfer RNAs. The sequence is that of tRNA pseudouridine synthase B from Corynebacterium glutamicum (strain ATCC 13032 / DSM 20300 / JCM 1318 / BCRC 11384 / CCUG 27702 / LMG 3730 / NBRC 12168 / NCIMB 10025 / NRRL B-2784 / 534).